Consider the following 294-residue polypeptide: 2-hydroxy-3-oxopropionate reductase (294 aa).

Residues G4–N18 and S95 each bind NAD(+). K170 is an active-site residue. Position 238 (K238) interacts with NAD(+).

Belongs to the HIBADH-related family. 2-hydroxy-3-oxopropionate reductase subfamily.

The catalysed reaction is (R)-glycerate + NADP(+) = 2-hydroxy-3-oxopropanoate + NADPH + H(+). It catalyses the reaction (R)-glycerate + NAD(+) = 2-hydroxy-3-oxopropanoate + NADH + H(+). The protein operates within carbohydrate acid metabolism; galactarate degradation; D-glycerate from galactarate: step 3/3. Catalyzes the reduction of tatronate semialdehyde to D-glycerate. In Escherichia coli O6:H1 (strain CFT073 / ATCC 700928 / UPEC), this protein is 2-hydroxy-3-oxopropionate reductase.